Here is a 422-residue protein sequence, read N- to C-terminus: Killer cell immunoglobulin-like receptor 3DL1 (422 aa).

The signal sequence occupies residues 1–21; that stretch reads MMFEFLSLLCSGFFLVQRMSA. The Extracellular segment spans residues 22–329; that stretch reads HMGSYDKPFL…KNLHIQIGLL (308 aa). 3 consecutive Ig-like C2-type domains span residues 42-100, 135-202, and 237-300; these read GQNV…HHQY, GENV…YNHS, and EQNM…FKNS. Asn44 carries N-linked (GlcNAc...) asparagine glycosylation. Cys49 and Cys95 form a disulfide bridge. Asn137 carries N-linked (GlcNAc...) asparagine glycosylation. Residues Cys142 and Cys195 are joined by a disulfide bond. 2 N-linked (GlcNAc...) asparagine glycosylation sites follow: Asn200 and Asn239. The cysteines at positions 244 and 293 are disulfide-linked. Residue Asn299 is glycosylated (N-linked (GlcNAc...) asparagine). The chain crosses the membrane as a helical span at residues 330 to 350; the sequence is VTMVLVIVVIIIIIIIIIIII. The Cytoplasmic segment spans residues 351-422; it reads YYYYFSKKSS…DTVVYTEVMI (72 aa).

Belongs to the immunoglobulin superfamily.

It localises to the cell membrane. In terms of biological role, receptor on natural killer (NK) cells. Inhibits the activity of NK cells thus preventing cell lysis. The sequence is that of Killer cell immunoglobulin-like receptor 3DL1 (Kir3dl1) from Rattus norvegicus (Rat).